The primary structure comprises 202 residues: Imidazoleglycerol-phosphate dehydratase (202 aa).

This sequence belongs to the imidazoleglycerol-phosphate dehydratase family.

It localises to the cytoplasm. It carries out the reaction D-erythro-1-(imidazol-4-yl)glycerol 3-phosphate = 3-(imidazol-4-yl)-2-oxopropyl phosphate + H2O. Its pathway is amino-acid biosynthesis; L-histidine biosynthesis; L-histidine from 5-phospho-alpha-D-ribose 1-diphosphate: step 6/9. The sequence is that of Imidazoleglycerol-phosphate dehydratase from Brucella anthropi (strain ATCC 49188 / DSM 6882 / CCUG 24695 / JCM 21032 / LMG 3331 / NBRC 15819 / NCTC 12168 / Alc 37) (Ochrobactrum anthropi).